A 587-amino-acid polypeptide reads, in one-letter code: Ran GTPase-activating protein 1 (587 aa).

An N-acetylalanine modification is found at Ala-2. Lys-8 participates in a covalent cross-link: Glycyl lysine isopeptide (Lys-Gly) (interchain with G-Cter in SUMO1); alternate. Residue Lys-8 forms a Glycyl lysine isopeptide (Lys-Gly) (interchain with G-Cter in SUMO2); alternate linkage. A Glycyl lysine isopeptide (Lys-Gly) (interchain with G-Cter in SUMO2) cross-link involves residue Lys-15. Ser-24 carries the post-translational modification Phosphoserine. LRR repeat units follow at residues 48-71, 111-134, 207-230, and 235-258; these read FDSL…VIAK, GAQL…GFEA, IGTL…ALAQ, and NPLL…AMAE. A Glycyl lysine isopeptide (Lys-Gly) (interchain with G-Cter in SUMO2) cross-link involves residue Lys-279. 2 LRR repeats span residues 292–319 and 320–343; these read LPKL…AMAD and KAEL…QLQE. Phosphoserine is present on Ser-301. The interval 357 to 430 is disordered; the sequence is LSDDEDEEEE…EPAPVLSSPP (74 aa). At Ser-358 the chain carries Phosphoserine. The segment covering 358-397 has biased composition (acidic residues); sequence SDDEDEEEEEEGEEEEEEAEEEEEEDEEEEEEEEEEEEEE. The segment covering 400-410 has biased composition (polar residues); that stretch reads QRGQGEKSATP. Position 409 is a phosphothreonine; by CDK2 (Thr-409). Ser-428 and Ser-435 each carry phosphoserine. Residue Thr-436 is modified to Phosphothreonine. Ser-442 carries the phosphoserine modification. Lys-452 participates in a covalent cross-link: Glycyl lysine isopeptide (Lys-Gly) (interchain with G-Cter in SUMO2). Positions 523–526 match the SUMO conjugation motif; that stretch reads LKSE. A Glycyl lysine isopeptide (Lys-Gly) (interchain with G-Cter in SUMO1); alternate cross-link involves residue Lys-524. Lys-524 is covalently cross-linked (Glycyl lysine isopeptide (Lys-Gly) (interchain with G-Cter in SUMO2); alternate). Lys-524 carries the post-translational modification N6-acetyllysine; alternate. Lys-586 participates in a covalent cross-link: Glycyl lysine isopeptide (Lys-Gly) (interchain with G-Cter in SUMO2).

This sequence belongs to the RNA1 family. Homodimer. Interacts with RAN. Forms a complex with RANBP2/NUP358, NXF1 and NXT1. Forms a tight complex in association with RANBP2/NUP358 and UBE2I/UBC9, the ubiquitin-conjugating enzyme E2. Interacts with UBE2I; the interaction conjugates SUMO1 to RANGAP1, and subsequently stabilizes interactions of sumoylated RANGAP1 with RANBP2/NUP358. The complex composed of RANBP2, SUMO1, RANGAP1 and UBE2I associates with nuclear pore complexes. Identified in a complex composed of RAN, RANBP2, sumoylated RANGAP1, UBE2I and XPO1. Identified in a complex composed of RAN, RANGAP1 and RANBP1. Interacts with TRAF6. Interacts with SUMO1 and SENP1. Interacts (when sumoylated) with MYCBP2; interaction inhibits MYCBP2 E3 ubiquitin-protein ligase activity and promotes MYCBP2 translocation to the nucleus. Post-translationally, phosphorylation occurs before nuclear envelope breakdown and continues throughout mitosis. Phosphorylated by the M-phase kinase cyclin B/Cdk1, in vitro. Differential timimg of dephosphorylation occurs during phases of mitosis. The phosphorylated form remains associated with RANBP2/NUP358 and the SUMO E2-conjugating enzyme, UBE2I, on nuclear pore complex (NPC) diassembly and during mitosis. Sumoylated. Sumoylation is necessary for targeting to the nuclear envelope (NE), and for association with mitotic spindles and kinetochores during mitosis. Also required for interaction with RANBP2 and is mediated by UBE2I. Desumoylated by HINT1. In terms of tissue distribution, highly expressed in brain, thymus and testis.

The protein localises to the cytoplasm. It is found in the nucleus. Its subcellular location is the nucleoplasm. It localises to the nucleus envelope. The protein resides in the chromosome. The protein localises to the centromere. It is found in the kinetochore. Its subcellular location is the cytoskeleton. It localises to the spindle. Functionally, GTPase activator for RAN. Converts cytoplasmic GTP-bound RAN to GDP-bound RAN, which is essential for RAN-mediated nuclear import and export. Mediates dissociation of cargo from nuclear export complexes containing XPO1, RAN and RANBP2 after nuclear export. The protein is Ran GTPase-activating protein 1 (RANGAP1) of Homo sapiens (Human).